The following is a 227-amino-acid chain: 7-cyano-7-deazaguanine synthase (227 aa).

Residue 8-18 coordinates ATP; that stretch reads LSGGLDSATVL. 4 residues coordinate Zn(2+): Cys191, Cys201, Cys204, and Cys207.

This sequence belongs to the QueC family. It depends on Zn(2+) as a cofactor.

The enzyme catalyses 7-carboxy-7-deazaguanine + NH4(+) + ATP = 7-cyano-7-deazaguanine + ADP + phosphate + H2O + H(+). Its pathway is purine metabolism; 7-cyano-7-deazaguanine biosynthesis. Functionally, catalyzes the ATP-dependent conversion of 7-carboxy-7-deazaguanine (CDG) to 7-cyano-7-deazaguanine (preQ(0)). This Paramagnetospirillum magneticum (strain ATCC 700264 / AMB-1) (Magnetospirillum magneticum) protein is 7-cyano-7-deazaguanine synthase.